The following is a 750-amino-acid chain: MTTKTPVIGSFAGVPLHSERAAQSPTEAAVHTHVAAAAAAHGYTPEQLVWHTPEGIDVTPVYIAADRAAAEAEGYPLHSFPGEPPFVRGPYPTMYVNQPWTIRQYAGFSTAADSNAFYRRNLAAGQKGLSVAFDLATHRGYDSDHPRVQGDVGMAGVAIDSILDMRQLFDGIDLSTVSVSMTMNGAVLPILALYVVAAEEQGVAPEQLAGTIQNDILKEFMVRNTYIYPPKPSMRIISDIFAYTSAKMPKFNSISISGYHIQEAGATADLELAYTLADGVDYIRAGLNAGLDIDSFAPRLSFFWGIGMNFFMEVAKLRAGRLLWSELVAQFAPKSAKSLSLRTHSQTSGWSLTAQDVFNNVARTCIEAMAATQGHTQSLHTNALDEALALPTDFSARIARNTQLVLQQESGTTRPIDPWGGSYYVEWLTHRLARRARAHIAEVAEHGGMAQAISDGIPKLRIEEAAARTQARIDSGQQPVVGVNKYQVPEDHEIEVLKVENSRVRAEQLAKLQRLRAGRDEPAVRAALAELTRAAAEQGRAGADGLGNNLLALAIDAARAQATVGEISEALEKVYGRHRAEIRTISGVYRDEVGKAPNIAAATELVEKFAEADGRRPRILIAKMGQDGHDRGQKVIATAFADIGFDVDVGSLFSTPEEVARQAADNDVHVIGVSSLAAGHLTLVPALRDALAQVGRPDIMIVVGGVIPPGDFDELYAAGATAIFPPGTVIADAAIDLLHRLAERLGYTLD.

(R)-methylmalonyl-CoA contacts are provided by Y91, M94, T101, R103, Y105, and S130. F133 and A155 together coordinate cob(II)alamin. Residues T211 and Q213 each contribute to the (R)-methylmalonyl-CoA site. Positions 222 and 223 each coordinate cob(II)alamin. Residues R223, H260, R299, and S301 each contribute to the (R)-methylmalonyl-CoA site. Positions 349, 386, 389, 628, 629, 630, 631, 674, 676, 705, and 728 each coordinate cob(II)alamin. A B12-binding domain is found at R616–T748.

Belongs to the methylmalonyl-CoA mutase family. In terms of assembly, heterodimer of an alpha and a beta chain. It depends on adenosylcob(III)alamin as a cofactor.

It carries out the reaction (R)-methylmalonyl-CoA = succinyl-CoA. The protein operates within metabolic intermediate metabolism; propanoyl-CoA degradation; succinyl-CoA from propanoyl-CoA: step 3/3. Functionally, catalyzes the isomerization of succinyl-CoA to methylmalonyl-CoA during synthesis of propionate from tricarboxylic acid-cycle intermediates. This chain is Probable methylmalonyl-CoA mutase large subunit (mutB), found in Mycobacterium bovis (strain ATCC BAA-935 / AF2122/97).